Here is a 255-residue protein sequence, read N- to C-terminus: 3-deoxy-manno-octulosonate cytidylyltransferase (255 aa).

The protein belongs to the KdsB family.

It is found in the cytoplasm. The catalysed reaction is 3-deoxy-alpha-D-manno-oct-2-ulosonate + CTP = CMP-3-deoxy-beta-D-manno-octulosonate + diphosphate. Its pathway is nucleotide-sugar biosynthesis; CMP-3-deoxy-D-manno-octulosonate biosynthesis; CMP-3-deoxy-D-manno-octulosonate from 3-deoxy-D-manno-octulosonate and CTP: step 1/1. It participates in bacterial outer membrane biogenesis; lipopolysaccharide biosynthesis. Functionally, activates KDO (a required 8-carbon sugar) for incorporation into bacterial lipopolysaccharide in Gram-negative bacteria. The chain is 3-deoxy-manno-octulosonate cytidylyltransferase from Psychromonas ingrahamii (strain DSM 17664 / CCUG 51855 / 37).